Here is a 164-residue protein sequence, read N- to C-terminus: Putative ankyrin repeat protein RBE_0585 (164 aa).

ANK repeat units follow at residues N42–L107 and D126–Y149.

This is Putative ankyrin repeat protein RBE_0585 from Rickettsia bellii (strain RML369-C).